We begin with the raw amino-acid sequence, 346 residues long: Insertion element IS476 uncharacterized 39.2 kDa protein (346 aa).

The segment at 1-50 is disordered; the sequence is MVSARPAFISGGPSTGGWRPTRQAAERTGGPEHSIEEVAGRGAPGHRSAE. Residues 29–39 are compositionally biased toward basic and acidic residues; sequence GGPEHSIEEVA. One can recognise an Integrase catalytic domain in the interval 169–329; sequence ASSMPNDTWS…IPPAQFAANY (161 aa).

This chain is Insertion element IS476 uncharacterized 39.2 kDa protein, found in Xanthomonas euvesicatoria.